Reading from the N-terminus, the 666-residue chain is Calcium/calmodulin-dependent protein kinase type II subunit beta (666 aa).

In terms of domain architecture, Protein kinase spans 14–272; that stretch reads YQLYEDIGKG…AHEALKHPWV (259 aa). A Phosphotyrosine modification is found at tyrosine 17. ATP-binding positions include 20–28 and lysine 43; that span reads IGKGAFSVV. The Proton acceptor role is filled by aspartate 136. Residues 283–292 are autoinhibitory domain; the sequence is HRQETVECLK. Threonine 287 carries the post-translational modification Phosphothreonine; by autocatalysis. Residues 291–301 form a calmodulin-binding region; it reads LKKFNARRKLK. Threonine 306 and threonine 307 each carry phosphothreonine; by autocatalysis. Residues 349–534 form a disordered region; that stretch reads ADGVKPQTNS…IPGPLPTPSR (186 aa). Over residues 354-369 the composition is skewed to polar residues; sequence PQTNSTKNSAAATSPK. A phosphoserine mark is found at serine 367, serine 394, and serine 397. 2 positions are modified to phosphothreonine: threonine 400 and threonine 401. Residues 432–447 are compositionally biased toward pro residues; the sequence is LPCPSPAPFSPLPAPS. The segment covering 479-491 has biased composition (low complexity); it reads SPALLGPLSSPSP. Residues 514–531 show a composition bias toward pro residues; sequence PVGPPPCPSPTIPGPLPT.

Belongs to the protein kinase superfamily. CAMK Ser/Thr protein kinase family. CaMK subfamily. As to quaternary structure, CAMK2 is composed of 4 different chains: alpha (CAMK2A), beta (CAMK2B), gamma (CAMK2G), and delta (CAMK2D). The different isoforms assemble into homo- or heteromultimeric holoenzymes composed of 12 subunits with two hexameric rings stacked one on top of the other. Interacts with SYNGAP1 and CAMK2N2. Interacts with MPDZ. Interacts with FOXO3. Interacts (when in a kinase inactive state not associated with calmodulin) with ARC; leading to target ARC to inactive synapses. Interacts with CAMK2N1; this interaction requires CAMK2B activation by Ca(2+). Autophosphorylation of Thr-287 following activation by Ca(2+)/calmodulin. Phosphorylation of Thr-287 locks the kinase into an activated state. As to expression, widely expressed. Expressed in adult and fetal brain. Expression is slightly lower in fetal brain. Expressed in skeletal muscle.

It localises to the cytoplasm. The protein resides in the cytoskeleton. Its subcellular location is the microtubule organizing center. The protein localises to the centrosome. It is found in the sarcoplasmic reticulum membrane. It localises to the synapse. The enzyme catalyses L-seryl-[protein] + ATP = O-phospho-L-seryl-[protein] + ADP + H(+). The catalysed reaction is L-threonyl-[protein] + ATP = O-phospho-L-threonyl-[protein] + ADP + H(+). Activated by Ca(2+)/calmodulin. Binding of calmodulin results in conformational change that relieves intrasteric autoinhibition and allows autophosphorylation of Thr-287 which turns the kinase in a constitutively active form and confers to the kinase a Ca(2+)-independent activity. In terms of biological role, calcium/calmodulin-dependent protein kinase that functions autonomously after Ca(2+)/calmodulin-binding and autophosphorylation, and is involved in dendritic spine and synapse formation, neuronal plasticity and regulation of sarcoplasmic reticulum Ca(2+) transport in skeletal muscle. In neurons, plays an essential structural role in the reorganization of the actin cytoskeleton during plasticity by binding and bundling actin filaments in a kinase-independent manner. This structural function is required for correct targeting of CaMK2A, which acts downstream of NMDAR to promote dendritic spine and synapse formation and maintain synaptic plasticity which enables long-term potentiation (LTP) and hippocampus-dependent learning. In developing hippocampal neurons, promotes arborization of the dendritic tree and in mature neurons, promotes dendritic remodeling. Also regulates the migration of developing neurons. Participates in the modulation of skeletal muscle function in response to exercise. In slow-twitch muscles, is involved in regulation of sarcoplasmic reticulum (SR) Ca(2+) transport and in fast-twitch muscle participates in the control of Ca(2+) release from the SR through phosphorylation of triadin, a ryanodine receptor-coupling factor, and phospholamban (PLN/PLB), an endogenous inhibitor of SERCA2A/ATP2A2. In response to interferon-gamma (IFN-gamma) stimulation, catalyzes phosphorylation of STAT1, stimulating the JAK-STAT signaling pathway. Phosphorylates reticulophagy regulator RETREG1 at 'Ser-151' under endoplasmic reticulum stress conditions which enhances RETREG1 oligomerization and its membrane scission and reticulophagy activity. This chain is Calcium/calmodulin-dependent protein kinase type II subunit beta (CAMK2B), found in Homo sapiens (Human).